Here is a 410-residue protein sequence, read N- to C-terminus: Chloroacetanilide N-alkylformylase, ferredoxin reductase component (410 aa).

FAD-binding residues include G14, D36, K49, V82, R130, D279, and V298.

It belongs to the FAD-dependent oxidoreductase family. In terms of assembly, the chloroacetanilide N-alkylformylase multicomponent enzyme system is composed of an oxygenase component (CndA) and an electron transfer component formed by a ferredoxin reductase (CndC1) and a ferredoxin (CndB1). In vitro, chloroacetanilide N-alkylformylase assays in which CndB1 is substituted for CndB2 demonstrate that the two enzymes possess nearly identical activities. Requires FAD as cofactor.

The catalysed reaction is 2 reduced [2Fe-2S]-[ferredoxin] + NAD(+) + H(+) = 2 oxidized [2Fe-2S]-[ferredoxin] + NADH. Functionally, component of the chloroacetanilide N-alkylformylase multicomponent enzyme system involved in the degradation of chloroacetanilide herbicides (N-alkoxyalkyl-N-chloroacetyl-substituted aniline derivatives). In vitro, catalyzes the transfers of electrons from ferredoxin (CndB1) to NADH. N-dealkylase utilizes NADH, but not NADPH, as the electron donor. This Rhizorhabdus wittichii (strain DC-6 / KACC 16600) (Sphingomonas wittichii) protein is Chloroacetanilide N-alkylformylase, ferredoxin reductase component.